Reading from the N-terminus, the 980-residue chain is Phosphoenolpyruvate carboxylase (980 aa).

Residues His-182 and Lys-625 contribute to the active site.

The protein belongs to the PEPCase type 1 family. Mg(2+) is required as a cofactor.

It catalyses the reaction oxaloacetate + phosphate = phosphoenolpyruvate + hydrogencarbonate. In terms of biological role, forms oxaloacetate, a four-carbon dicarboxylic acid source for the tricarboxylic acid cycle. The polypeptide is Phosphoenolpyruvate carboxylase (Bordetella pertussis (strain Tohama I / ATCC BAA-589 / NCTC 13251)).